The chain runs to 44 residues: Photosystem I reaction center subunit IX (44 aa).

Residues 9–29 (FVRSAPVVAAIWLSLTAGIII) form a helical membrane-spanning segment.

Belongs to the PsaJ family.

It is found in the cellular thylakoid membrane. Functionally, may help in the organization of the PsaE and PsaF subunits. The protein is Photosystem I reaction center subunit IX of Prochlorococcus marinus (strain MIT 9301).